The following is a 120-amino-acid chain: Chaperonin GroEL (120 aa).

23 to 27 (DGTTT) lines the ATP pocket.

The protein belongs to the chaperonin (HSP60) family. Forms a cylinder of 14 subunits composed of two heptameric rings stacked back-to-back. Interacts with the co-chaperonin GroES.

It is found in the cytoplasm. It catalyses the reaction ATP + H2O + a folded polypeptide = ADP + phosphate + an unfolded polypeptide.. Functionally, together with its co-chaperonin GroES, plays an essential role in assisting protein folding. The GroEL-GroES system forms a nano-cage that allows encapsulation of the non-native substrate proteins and provides a physical environment optimized to promote and accelerate protein folding. In Mycolicibacterium vaccae (Mycobacterium vaccae), this protein is Chaperonin GroEL.